A 163-amino-acid chain; its full sequence is Ureidoglycolate lyase 2 (163 aa).

This sequence belongs to the ureidoglycolate lyase family. In terms of assembly, homodimer. Requires Ni(2+) as cofactor.

The enzyme catalyses (S)-ureidoglycolate = urea + glyoxylate. The protein operates within nitrogen metabolism; (S)-allantoin degradation. Catalyzes the catabolism of the allantoin degradation intermediate (S)-ureidoglycolate, generating urea and glyoxylate. Involved in the utilization of allantoin as nitrogen source. This chain is Ureidoglycolate lyase 2, found in Rhizobium meliloti (strain 1021) (Ensifer meliloti).